Reading from the N-terminus, the 296-residue chain is Methylsterol monooxygenase 1 (296 aa).

The next 2 helical transmembrane spans lie at 55–75 and 100–120; these read LLVH…FQFI and TLIF…YYFT. The Fatty acid hydroxylase domain maps to 145-274; that stretch reads CAVIEDAWHY…FTWWDRIFGT (130 aa). A Histidine box-1 motif is present at residues 157 to 161; sequence HRLLH. A Histidine box-2 motif is present at residues 170–174; sequence HKVHH. A helical transmembrane segment spans residues 199–219; it reads FFIGIVVFCNHVVLLWAWVIC. The Histidine box-3 motif lies at 249-255; it reads FHDFHHM.

This sequence belongs to the sterol desaturase family. Fe cation serves as cofactor.

Its subcellular location is the endoplasmic reticulum membrane. The enzyme catalyses 4,4-dimethyl-5alpha-cholest-7-en-3beta-ol + 6 Fe(II)-[cytochrome b5] + 3 O2 + 5 H(+) = 4alpha-carboxy-4beta-methyl-5alpha-cholest-7-ene-3beta-ol + 6 Fe(III)-[cytochrome b5] + 4 H2O. It participates in steroid biosynthesis; zymosterol biosynthesis; zymosterol from lanosterol: step 3/6. Its function is as follows. Catalyzes the first step in the removal of the two C-4 methyl groups of 4,4-dimethylzymosterol. The polypeptide is Methylsterol monooxygenase 1 (MSMO1) (Gallus gallus (Chicken)).